The primary structure comprises 94 residues: Acylphosphatase (94 aa).

Residues 5–94 (RLTAFVHGHV…PRDVEGFVER (90 aa)) form the Acylphosphatase-like domain. Residues arginine 20 and asparagine 38 contribute to the active site.

Belongs to the acylphosphatase family.

The enzyme catalyses an acyl phosphate + H2O = a carboxylate + phosphate + H(+). This chain is Acylphosphatase (acyP), found in Corynebacterium glutamicum (strain ATCC 13032 / DSM 20300 / JCM 1318 / BCRC 11384 / CCUG 27702 / LMG 3730 / NBRC 12168 / NCIMB 10025 / NRRL B-2784 / 534).